A 507-amino-acid polypeptide reads, in one-letter code: Histidine ammonia-lyase (507 aa).

Positions 141-143 form a cross-link, 5-imidazolinone (Ala-Gly); sequence ASG. Position 142 is a 2,3-didehydroalanine (Ser) (Ser142).

Belongs to the PAL/histidase family. Post-translationally, contains an active site 4-methylidene-imidazol-5-one (MIO), which is formed autocatalytically by cyclization and dehydration of residues Ala-Ser-Gly.

It localises to the cytoplasm. The enzyme catalyses L-histidine = trans-urocanate + NH4(+). It participates in amino-acid degradation; L-histidine degradation into L-glutamate; N-formimidoyl-L-glutamate from L-histidine: step 1/3. This is Histidine ammonia-lyase from Burkholderia cenocepacia (strain ATCC BAA-245 / DSM 16553 / LMG 16656 / NCTC 13227 / J2315 / CF5610) (Burkholderia cepacia (strain J2315)).